A 143-amino-acid chain; its full sequence is Heat shock protein 16 (143 aa).

A sHSP domain is found at 30–143 (QIPGELSPSI…SQTKKQIAIK (114 aa)).

This sequence belongs to the small heat shock protein (HSP20) family.

It is found in the cytoplasm. The protein resides in the nucleus. The chain is Heat shock protein 16 (hsp16) from Schizosaccharomyces pombe (strain 972 / ATCC 24843) (Fission yeast).